A 580-amino-acid polypeptide reads, in one-letter code: Lysine--tRNA ligase (580 aa).

The 'HIGH' region motif lies at 43 to 51; that stretch reads PSGPIHLGN. The tract at residues 178–209 is disordered; it reads KAPAKKSQKPLDEAELEAAEGSGAAAEDDGSS. Positions 196–209 are enriched in low complexity; sequence AEGSGAAAEDDGSS. The 'KMSKS' region signature appears at 325–329; it reads KMSSS.

The protein belongs to the class-I aminoacyl-tRNA synthetase family.

The protein localises to the cytoplasm. The catalysed reaction is tRNA(Lys) + L-lysine + ATP = L-lysyl-tRNA(Lys) + AMP + diphosphate. The protein is Lysine--tRNA ligase (lysS) of Streptomyces coelicolor (strain ATCC BAA-471 / A3(2) / M145).